A 477-amino-acid chain; its full sequence is Adenosylhomocysteinase (477 aa).

Substrate is bound by residues Thr63, Asp142, and Glu202. Residue 203 to 205 (TTT) participates in NAD(+) binding. Residues Lys232 and Asp236 each coordinate substrate. NAD(+) contacts are provided by residues Asn237, 266 to 271 (GYGDVG), Glu289, Asn324, 345 to 347 (IGH), and Asn390.

It belongs to the adenosylhomocysteinase family. The cofactor is NAD(+).

It is found in the cytoplasm. It catalyses the reaction S-adenosyl-L-homocysteine + H2O = L-homocysteine + adenosine. It participates in amino-acid biosynthesis; L-homocysteine biosynthesis; L-homocysteine from S-adenosyl-L-homocysteine: step 1/1. May play a key role in the regulation of the intracellular concentration of adenosylhomocysteine. The sequence is that of Adenosylhomocysteinase from Methylibium petroleiphilum (strain ATCC BAA-1232 / LMG 22953 / PM1).